We begin with the raw amino-acid sequence, 53 residues long: Chlorophyll a-b binding protein 1, chloroplastic (53 aa).

Chlorophyll b is bound at residue phenylalanine 18. Chlorophyll a contacts are provided by glutamate 48 and histidine 51. Arginine 53 serves as a coordination point for chlorophyll b.

The protein belongs to the light-harvesting chlorophyll a/b-binding (LHC) protein family. As to quaternary structure, the LHC complex consists of chlorophyll a-b binding proteins. Requires Binds at least 14 chlorophylls (8 Chl-a and 6 Chl-b) and carotenoids such as lutein and neoxanthin. as cofactor. Post-translationally, photoregulated by reversible phosphorylation of its threonine residues.

Its subcellular location is the plastid. It is found in the chloroplast thylakoid membrane. Its function is as follows. The light-harvesting complex (LHC) functions as a light receptor, it captures and delivers excitation energy to photosystems with which it is closely associated. This is Chlorophyll a-b binding protein 1, chloroplastic from Populus euphratica (Euphrates poplar).